Consider the following 88-residue polypeptide: Large ribosomal subunit protein bL27 (88 aa).

Residues 1-22 (MAQKKAGGSSRNGRDSAGRRLG) are disordered.

The protein belongs to the bacterial ribosomal protein bL27 family.

This Gluconobacter oxydans (strain 621H) (Gluconobacter suboxydans) protein is Large ribosomal subunit protein bL27.